The sequence spans 418 residues: MIHSLFLINCSGDIFLEKHWKSVVSQSVCDYFFEAQEKAIDVENVPPVISTPLHYLISIYRDKIFFVSVIQTEVPPLFVIEFLHRVADTFQDYFGECSETAIKDNVVIVYELLEEMLDNGFPLATESNILKELIKPPTILRSVVNSITGSSNVGDTLPTGQLSNIPWRRAGVKYTNNEAYFDVIEEIDAIIDKSGSTVFAEIQGVIDSCIKLSGMPDLSLSFMNPRLLDDVSFHPCIRFKRWESERVLSFIPPDGNFRLISYRVSSQNLVAIPVYVKHLISFKENSSSGRFDVTIGPKQNMGKTVEGVVMTVHMPKAVLNMNLTATQGSYTFDPVTKVLAWDVGKITPQKLPNLKGIVNLQSGAPKPEENPSLNIQFKIQQLAISGLKVNRLDMYGEKYKPFKGVKYITKAGKFQVRT.

The region spanning 176 to 417 is the MHD domain; the sequence is NNEAYFDVIE…ITKAGKFQVR (242 aa).

This sequence belongs to the adaptor complexes medium subunit family. As to quaternary structure, the AP-3 complex associates with the BLOC-1 complex.

It is found in the golgi apparatus. The protein resides in the cytoplasmic vesicle membrane. In terms of biological role, part of the AP-3 complex, an adaptor-related complex which is not clathrin-associated. The complex is associated with the Golgi region as well as more peripheral structures. It facilitates the budding of vesicles from the Golgi membrane and may be directly involved in trafficking to lysosomes. In concert with the BLOC-1 complex, AP-3 is required to target cargos into vesicles assembled at cell bodies for delivery into neurites and nerve terminals. This chain is AP-3 complex subunit mu-1 (AP3M1), found in Gallus gallus (Chicken).